Consider the following 128-residue polypeptide: Probable heavy metal-dependent transcriptional regulator HI_0293 (128 aa).

Residues 1-69 (MNISEAAKLV…LHQIAQLLAL (69 aa)) enclose the HTH merR-type domain. Residues 4 to 23 (SEAAKLVGLSTKQIRDYEKM) constitute a DNA-binding region (H-T-H motif).

The protein resides in the cytoplasm. Could be a copper-dependent transcriptional activator of the ATPase HI_0290. The polypeptide is Probable heavy metal-dependent transcriptional regulator HI_0293 (Haemophilus influenzae (strain ATCC 51907 / DSM 11121 / KW20 / Rd)).